Consider the following 253-residue polypeptide: U2 small nuclear ribonucleoprotein A' (253 aa).

LRR repeat units lie at residues 19–40 (KDRE…GIAK), 41–62 (DQDA…PFFP), 63–84 (RLHT…IAST), and 87–108 (NLTT…DPLR). Positions 121 to 159 (NPVTRKEHYRYWVIWRIPSVRFLDYQKVKDAERAKAKEL) constitute an LRRCT domain. The interval 228–253 (ELNEGRIPGGALDAGEDSEDENQMQT) is disordered. Residues 241–253 (AGEDSEDENQMQT) are compositionally biased toward acidic residues.

This sequence belongs to the U2 small nuclear ribonucleoprotein A family. In terms of assembly, associated with the spliceosome.

The protein localises to the nucleus. Involved in pre-mRNA splicing. The protein is U2 small nuclear ribonucleoprotein A' (lea1) of Aspergillus fumigatus (strain ATCC MYA-4609 / CBS 101355 / FGSC A1100 / Af293) (Neosartorya fumigata).